A 406-amino-acid chain; its full sequence is Nicotinate phosphoribosyltransferase (406 aa).

His227 is modified (phosphohistidine; by autocatalysis).

The protein belongs to the NAPRTase family. Transiently phosphorylated on a His residue during the reaction cycle. Phosphorylation strongly increases the affinity for substrates and increases the rate of nicotinate D-ribonucleotide production. Dephosphorylation regenerates the low-affinity form of the enzyme, leading to product release.

The enzyme catalyses nicotinate + 5-phospho-alpha-D-ribose 1-diphosphate + ATP + H2O = nicotinate beta-D-ribonucleotide + ADP + phosphate + diphosphate. It participates in cofactor biosynthesis; NAD(+) biosynthesis; nicotinate D-ribonucleotide from nicotinate: step 1/1. Functionally, catalyzes the synthesis of beta-nicotinate D-ribonucleotide from nicotinate and 5-phospho-D-ribose 1-phosphate at the expense of ATP. In Methanosarcina mazei (strain ATCC BAA-159 / DSM 3647 / Goe1 / Go1 / JCM 11833 / OCM 88) (Methanosarcina frisia), this protein is Nicotinate phosphoribosyltransferase.